Here is a 434-residue protein sequence, read N- to C-terminus: Chaperone SurA (434 aa).

An N-terminal signal peptide occupies residues M1–A22. PpiC domains are found at residues D173–D274 and I283–E383.

The protein localises to the periplasm. It carries out the reaction [protein]-peptidylproline (omega=180) = [protein]-peptidylproline (omega=0). Chaperone involved in the correct folding and assembly of outer membrane proteins. Recognizes specific patterns of aromatic residues and the orientation of their side chains, which are found more frequently in integral outer membrane proteins. May act in both early periplasmic and late outer membrane-associated steps of protein maturation. The chain is Chaperone SurA from Shewanella sp. (strain MR-4).